The chain runs to 694 residues: N,N-dimethylglycine/sarcosine dehydrogenase (694 aa).

In the N-terminal section; belongs to the NADH:flavin oxidoreductase/NADH oxidase family. Monomer. The purified enzyme exists in the form of a monomer, dimer or polymer under non-denaturing conditions, but only the monomeric protein exhibits enzyme activity. FAD serves as cofactor. The cofactor is NAD(+). NADP(+) is required as a cofactor.

Its subcellular location is the cytoplasm. It catalyses the reaction oxidized 2[4Fe-4S]-[ferredoxin] + N,N-dimethylglycine + H2O = reduced 2[4Fe-4S]-[ferredoxin] + sarcosine + formaldehyde + 2 H(+). The catalysed reaction is oxidized 2[4Fe-4S]-[ferredoxin] + sarcosine + H2O = reduced 2[4Fe-4S]-[ferredoxin] + formaldehyde + glycine + 2 H(+). Its activity is regulated as follows. Ca(2+) increases the activity by 12%, while the other metal ions tested have no or slightly inhibitory effects. The chelating agent EDTA inhibits the activity by 33%. Functionally, involved in degradation of glycine betaine. Catalyzes the demethylation of both N,N-dimethylglycine (DMG) and sarcosine, releasing formaldehyde and forming glycine as the final product. Does not show activity toward trimethylamine (TMA), histamine, glycine betaine (GB) or choline. The C-N bond in DMG is probably oxidized by removal of a hydride equivalent to form a labile imine intermediate, which is then spontaneously hydrolyzed in the presence of water, producing sarcosine and formaldehyde. The two protons subtracted from DMG are transferred to the non-covalently bound FAD, resulting in the reduced form of FAD, which is subsequently reoxidized by coupling with reduction of the enzyme-bound NAD(P)(+). Regeneration of NAD(P)(+) is achieved by electron transfer to the [4Fe-4S] cluster in the probable membrane-anchored ferredoxin csal_0991. In Chromohalobacter salexigens (strain ATCC BAA-138 / DSM 3043 / CIP 106854 / NCIMB 13768 / 1H11), this protein is N,N-dimethylglycine/sarcosine dehydrogenase.